Here is a 651-residue protein sequence, read N- to C-terminus: Acetyl-coenzyme A synthetase (651 aa).

CoA-binding positions include 191 to 194 (RGGK), Thr-311, and Asn-335. Residues 387 to 389 (GEP), 411 to 416 (DTWWQT), Asp-500, and Arg-515 each bind ATP. Ser-523 provides a ligand contact to CoA. Arg-526 lines the ATP pocket. Mg(2+)-binding residues include Val-537, His-539, and Val-542. Arg-584 is a binding site for CoA. Lys-609 is subject to N6-acetyllysine.

This sequence belongs to the ATP-dependent AMP-binding enzyme family. It depends on Mg(2+) as a cofactor. In terms of processing, acetylated. Deacetylation by the SIR2-homolog deacetylase activates the enzyme.

The enzyme catalyses acetate + ATP + CoA = acetyl-CoA + AMP + diphosphate. Functionally, catalyzes the conversion of acetate into acetyl-CoA (AcCoA), an essential intermediate at the junction of anabolic and catabolic pathways. AcsA undergoes a two-step reaction. In the first half reaction, AcsA combines acetate with ATP to form acetyl-adenylate (AcAMP) intermediate. In the second half reaction, it can then transfer the acetyl group from AcAMP to the sulfhydryl group of CoA, forming the product AcCoA. The protein is Acetyl-coenzyme A synthetase of Pseudomonas syringae pv. tomato (strain ATCC BAA-871 / DC3000).